Reading from the N-terminus, the 236-residue chain is Small ribosomal subunit protein eS6 (236 aa).

2 positions are modified to phosphoserine: Ser232 and Ser233.

This sequence belongs to the eukaryotic ribosomal protein eS6 family. Phosphorylated.

This chain is Small ribosomal subunit protein eS6 (RPS6A), found in Candida glabrata (strain ATCC 2001 / BCRC 20586 / JCM 3761 / NBRC 0622 / NRRL Y-65 / CBS 138) (Yeast).